A 393-amino-acid polypeptide reads, in one-letter code: Formate-dependent phosphoribosylglycinamide formyltransferase (393 aa).

N(1)-(5-phospho-beta-D-ribosyl)glycinamide is bound by residues 22-23 (EL) and Glu-82. ATP contacts are provided by residues Arg-114, Lys-155, 160 to 165 (SSGHGQ), 195 to 198 (EGFV), and Glu-203. The ATP-grasp domain maps to 119–308 (RLAAEKLKLP…EFALHARAIL (190 aa)). Mg(2+) is bound by residues Glu-267 and Glu-279. N(1)-(5-phospho-beta-D-ribosyl)glycinamide contacts are provided by residues Asp-286, Lys-356, and 363–364 (RR).

Belongs to the PurK/PurT family. Homodimer.

It catalyses the reaction N(1)-(5-phospho-beta-D-ribosyl)glycinamide + formate + ATP = N(2)-formyl-N(1)-(5-phospho-beta-D-ribosyl)glycinamide + ADP + phosphate + H(+). Its pathway is purine metabolism; IMP biosynthesis via de novo pathway; N(2)-formyl-N(1)-(5-phospho-D-ribosyl)glycinamide from N(1)-(5-phospho-D-ribosyl)glycinamide (formate route): step 1/1. Involved in the de novo purine biosynthesis. Catalyzes the transfer of formate to 5-phospho-ribosyl-glycinamide (GAR), producing 5-phospho-ribosyl-N-formylglycinamide (FGAR). Formate is provided by PurU via hydrolysis of 10-formyl-tetrahydrofolate. This Histophilus somni (strain 129Pt) (Haemophilus somnus) protein is Formate-dependent phosphoribosylglycinamide formyltransferase.